A 1203-amino-acid polypeptide reads, in one-letter code: Nitric oxide synthase 3 (1203 aa).

A disordered region spans residues 1–71; that stretch reads MGNLKSVAQE…PPEGPKFPRV (71 aa). Gly2 is lipidated: N-myristoyl glycine. 2 S-palmitoyl cysteine lipidation sites follow: Cys15 and Cys26. The span at 15 to 27 shows a compositional bias: gly residues; the sequence is CGLGLGLGLGLCG. Thr33 is modified (phosphothreonine). A compositionally biased stretch (pro residues) spans 33 to 66; sequence TPAPEPSRAPASLLPPAPEHSPPSSPLTQPPEGP. Cys94 and Cys99 together coordinate Zn(2+). The segment at 98–486 is interaction with NOSIP; it reads RCLGSLVFPR…PDPWKGSAAK (389 aa). (6R)-L-erythro-5,6,7,8-tetrahydrobiopterin is bound at residue Ser102. Ser114 carries the phosphoserine; by CDK5 modification. Cys184 serves as a coordination point for heme b. Gln247, Trp356, Tyr357, and Glu361 together coordinate L-arginine. Arg365 is a binding site for (6R)-L-erythro-5,6,7,8-tetrahydrobiopterin. Asn366 serves as a coordination point for L-arginine. (6R)-L-erythro-5,6,7,8-tetrahydrobiopterin is bound by residues Ala446, Trp447, and Phe460. Tyr475 contacts heme b. Residues 491 to 510 form a calmodulin-binding region; the sequence is TRKKTFKEVANAVKISASLM. Position 495 is a phosphothreonine; by AMPK (Thr495). The region spanning 520–703 is the Flavodoxin-like domain; sequence ATILYGSETG…AFRGWAQAAF (184 aa). Positions 526, 527, 528, 530, 572, and 573 each coordinate FMN. Phosphoserine occurs at positions 615, 633, and 638. FMN-binding residues include Ser654, Cys661, Glu687, and Gln691. Residues 756–1002 form the FAD-binding FR-type domain; sequence RKMFQATIRS…IRGAPSFRLP (247 aa). Residue Arg776 coordinates NADP(+). His798 lines the FAD pocket. Phosphoserine is present on Ser836. FAD contacts are provided by Arg938, Tyr940, Ser941, Thr956, Ala958, Tyr962, Val975, Cys976, and Ser977. The NADP(+) site is built by Thr1016, Arg1049, Ser1078, Arg1079, Lys1085, Tyr1087, and Gln1089. The residue at position 1175 (Thr1175) is a Phosphothreonine. Ser1177 carries the post-translational modification Phosphoserine; by AMPK. Ser1179 carries the post-translational modification Phosphoserine.

This sequence belongs to the NOS family. In terms of assembly, homodimer. Interacts with NOSIP and NOSTRIN. Interacts with HSP90AB1. Forms a complex with ASL, ASS1 and SLC7A1; the complex regulates cell-autonomous L-arginine synthesis and citrulline recycling while channeling extracellular L-arginine to nitric oxide synthesis pathway. The cofactor is heme b. FAD serves as cofactor. It depends on FMN as a cofactor. (6R)-L-erythro-5,6,7,8-tetrahydrobiopterin is required as a cofactor. In terms of processing, phosphorylation by AMPK at Ser-1177 in the presence of Ca(2+)-calmodulin (CaM) activates activity. In absence of Ca(2+)-calmodulin, AMPK also phosphorylates Thr-495, resulting in inhibition of activity. Phosphorylation of Ser-114 by CDK5 reduces activity. In terms of tissue distribution, platelets, placenta, liver and kidney.

The protein localises to the cell membrane. The protein resides in the membrane. Its subcellular location is the caveola. It localises to the cytoplasm. It is found in the cytoskeleton. The protein localises to the golgi apparatus. The catalysed reaction is 2 L-arginine + 3 NADPH + 4 O2 + H(+) = 2 L-citrulline + 2 nitric oxide + 3 NADP(+) + 4 H2O. Its activity is regulated as follows. Stimulated by calcium/calmodulin. Inhibited by NOSIP and NOSTRIN. In terms of biological role, produces nitric oxide (NO) which is implicated in vascular smooth muscle relaxation through a cGMP-mediated signal transduction pathway. NO mediates vascular endothelial growth factor (VEGF)-induced angiogenesis in coronary vessels and promotes blood clotting through the activation of platelets. Functionally, lacks eNOS activity, dominant-negative form that may down-regulate eNOS activity by forming heterodimers with isoform 1. In Homo sapiens (Human), this protein is Nitric oxide synthase 3.